The following is a 435-amino-acid chain: Methylenetetrahydrofolate--tRNA-(uracil-5-)-methyltransferase TrmFO (435 aa).

9–14 (GAGLAG) contributes to the FAD binding site.

It belongs to the MnmG family. TrmFO subfamily. FAD is required as a cofactor.

The protein localises to the cytoplasm. The enzyme catalyses uridine(54) in tRNA + (6R)-5,10-methylene-5,6,7,8-tetrahydrofolate + NADH + H(+) = 5-methyluridine(54) in tRNA + (6S)-5,6,7,8-tetrahydrofolate + NAD(+). It carries out the reaction uridine(54) in tRNA + (6R)-5,10-methylene-5,6,7,8-tetrahydrofolate + NADPH + H(+) = 5-methyluridine(54) in tRNA + (6S)-5,6,7,8-tetrahydrofolate + NADP(+). Its function is as follows. Catalyzes the folate-dependent formation of 5-methyl-uridine at position 54 (M-5-U54) in all tRNAs. This chain is Methylenetetrahydrofolate--tRNA-(uracil-5-)-methyltransferase TrmFO, found in Staphylococcus haemolyticus (strain JCSC1435).